A 736-amino-acid polypeptide reads, in one-letter code: 1,4-alpha-glucan branching enzyme GlgB (736 aa).

D415 (nucleophile) is an active-site residue. Catalysis depends on E468, which acts as the Proton donor.

It belongs to the glycosyl hydrolase 13 family. GlgB subfamily. Monomer.

The enzyme catalyses Transfers a segment of a (1-&gt;4)-alpha-D-glucan chain to a primary hydroxy group in a similar glucan chain.. The protein operates within glycan biosynthesis; glycogen biosynthesis. Functionally, catalyzes the formation of the alpha-1,6-glucosidic linkages in glycogen by scission of a 1,4-alpha-linked oligosaccharide from growing alpha-1,4-glucan chains and the subsequent attachment of the oligosaccharide to the alpha-1,6 position. The protein is 1,4-alpha-glucan branching enzyme GlgB of Rhodopirellula baltica (strain DSM 10527 / NCIMB 13988 / SH1).